Consider the following 284-residue polypeptide: Neutral protease 2 homolog AFLA_119780 (284 aa).

Intrachain disulfides connect cysteine 113–cysteine 185 and cysteine 192–cysteine 210. Zn(2+) is bound at residue histidine 235. The active site involves glutamate 236. Zn(2+) is bound by residues histidine 239 and aspartate 250.

The protein belongs to the peptidase M35 family. Zn(2+) serves as cofactor.

It localises to the secreted. It catalyses the reaction Preferential cleavage of bonds with hydrophobic residues in P1'. Also 3-Asn-|-Gln-4 and 8-Gly-|-Ser-9 bonds in insulin B chain.. Its function is as follows. Secreted metalloproteinase that allows assimilation of proteinaceous substrates. Shows high activities on basic nuclear substrates such as histone and protamine. The chain is Neutral protease 2 homolog AFLA_119780 from Aspergillus flavus (strain ATCC 200026 / FGSC A1120 / IAM 13836 / NRRL 3357 / JCM 12722 / SRRC 167).